The primary structure comprises 93 residues: uncharacterized protein (93 aa).

Residues aspartate 25–lysine 68 adopt a coiled-coil conformation.

This is an uncharacterized protein from Dictyostelium discoideum (Social amoeba).